We begin with the raw amino-acid sequence, 293 residues long: tRNA pseudouridine synthase B (293 aa).

Asp40 acts as the Nucleophile in catalysis.

It belongs to the pseudouridine synthase TruB family. Type 1 subfamily.

The catalysed reaction is uridine(55) in tRNA = pseudouridine(55) in tRNA. Functionally, responsible for synthesis of pseudouridine from uracil-55 in the psi GC loop of transfer RNAs. The chain is tRNA pseudouridine synthase B from Mycolicibacterium paratuberculosis (strain ATCC BAA-968 / K-10) (Mycobacterium paratuberculosis).